Reading from the N-terminus, the 444-residue chain is U-box domain-containing protein 31 (444 aa).

One can recognise a U-box domain in the interval 59–133 (EIPSVFICPI…YTWFSQKYVL (75 aa)). ARM repeat units lie at residues 301–340 (KQVRNLLVRIGAVPQLVDVLPCLDVECLESALFVLDSLCL) and 343–382 (EGRIALKDSVNTIPHTVRLLMKVSEKCTNYAISILWSVCK).

The enzyme catalyses S-ubiquitinyl-[E2 ubiquitin-conjugating enzyme]-L-cysteine + [acceptor protein]-L-lysine = [E2 ubiquitin-conjugating enzyme]-L-cysteine + N(6)-ubiquitinyl-[acceptor protein]-L-lysine.. The protein operates within protein modification; protein ubiquitination. Functions as an E3 ubiquitin ligase. This chain is U-box domain-containing protein 31 (PUB31), found in Arabidopsis thaliana (Mouse-ear cress).